The chain runs to 1758 residues: MCFFLGSRLAYAENIDGSSTISNRDISGSLNIGINKDANIDINGTVNIKDYFSVATCNGQSSTCPEGGLNASAKIDKSASVGASVTIVGDSSKGELNIDGGSTLYTQQLWVSGNDNDKTSNVSDDSNGSLSINNGSNVFVVSSQDDTPFKTNSVKWNQNIISQGNNITDGTVSSGDLVLGKTGNGIIDIDNNSKLDVKNDVVVSTGVDGIPNEKPSEINIKNESNFSVHGDMKGGISAAGKLNLNMDNSSNLHVDKNIAVGIGRESNITVSASRESSIFSDGNFTVATGNNSNANLKLDASNLSVNGVSTIGSGDGSITKFDIKNGSVVTSSSDMTLAKGKGTQANINISSSELNTGSLSVGEGDNADVKMTGSGASVSSKKTFTVAKGNNASATLNYTGSKIDIGSGYIGEGESAKTQLELNNSALTASGKVFIGQGNTTQTNLTLNDKSSVNVSGEMSVAQGSSASVDVTATNAVLSADSLSLGGGEAAKVTMTGSGATVSSKNTFTVAKGNNASATLDYTDSKIDIGSGYIGEGEAAKTQLELNNSALTASGKVFIGQGNTTQTNLTLNDKSSVNVSDEMSVAQGSSASVDVTITNAVLSADSLSLGGGEAAKVTMTGNRATISSGNTFTVAKGNNASATLDYSDSKINIGNGYIGGGEKAQTVLTLKDSALAATGDVIMGQGQETQTDLTLSPQSSIKVSGNMSIAQGNAASAKVIVDNADLSANSMSIGEGDTAAVTMTGNGATISSGNTFTVARGNNASATLDYSDSKINIGNGYIGGGEKAQTVLTLKDSALAATGDVIMGQGQETQTDLTLSPQSSIKVSGNMSIAQGNAASAKVIVDNADLSANSMSIGEGDTAAVTMTGNGATISSGNTFTVARGNNASATLDYSDSKINIGNGYIGVGEKSHTLLKLDNSTFHAAGNIDIGKGSSTIANVSVGAGSNMSIKGNASIGVGDQAKAKFSVKDSVLNIGSSLVLGQGNSTEAEMSVEHSQLYSGGLLLGTANNAVVSMSANNSEISVVGDYTVAKGDGSEATLIYKNSDINLGNGILGAGSGVKTDLSLDNSKFVASDGIIIGKGDNAITNLSISDHSVFKGERINIGNGSYSKNSISITGNSIFDFGSSQESTIGEGDYSQSLVTINDASVYGDGSLTLAKGNNSFAVLNLQDNAVTNANNISLATGLGSKAIVNVSNMNSGQFNPVSMGAGDGYAEVNFDGVNGYTLSTNFICMDSGSCADTVINVNRGTVSLSGTNDWKGQINVYDGTRLDARGNDAVDGILNVSKEAQVDFNGYSQHMTGIDNKGMIYLSDGSASSDVYLDKDYVAHDGSGVQFGIFGQKEADVMHVKGDTSGSSGIVVTTNSKNKIKKGGDILLVEVNGDSSGSFYLNSLIKNGKEYKVTGDYIDVGAWEYALNKKRKNWYLSVDMRPEPGAFINNSKSMLDMFALQRYDIPGQHRYPTLFENLYNNGMWIQFNNNSGSNSEVYDNLKTSYSLNTMMIGGDIYNWTDGYNYSHIGIMGGMGSAANKTTSTNNKRATGNVDGYTLGLYHVFQQNISDGLNESERQGLWTYSSIQYMDYDNSVSSTNNFKANYGVNGFRLTGEVGYLKNIGGIQPSDFYVEPKLYLSHTELSGGVVEDLQGGKITYPNSLTIIEPGVFFSYRKTHESTSNDEAMFKDYIKQSVVDAWFGGGYSFKTGNYSRTNFDSDMVEYNTSDNFALKSGVEFEFLKDARLLLTSSYSINNDRNLSFILGGNYYF.

The signal sequence occupies residues 1 to 12 (MCFFLGSRLAYA). Residues 1465 to 1758 (ENLYNNGMWI…SFILGGNYYF (294 aa)) enclose the Autotransporter domain.

The protein localises to the cell outer membrane. This is an uncharacterized protein from Escherichia coli (strain K12).